The following is a 242-amino-acid chain: Uridylate kinase (242 aa).

Residue 11–14 (KLSG) coordinates ATP. Residue glycine 53 coordinates UMP. The ATP site is built by glycine 54 and arginine 58. UMP-binding positions include aspartate 73 and 134-141 (SGNPFFTT). Residues threonine 161, tyrosine 167, and aspartate 170 each contribute to the ATP site.

The protein belongs to the UMP kinase family. In terms of assembly, homohexamer.

It is found in the cytoplasm. It catalyses the reaction UMP + ATP = UDP + ADP. Its pathway is pyrimidine metabolism; CTP biosynthesis via de novo pathway; UDP from UMP (UMPK route): step 1/1. Inhibited by UTP. Its function is as follows. Catalyzes the reversible phosphorylation of UMP to UDP. The polypeptide is Uridylate kinase (Thermosynechococcus vestitus (strain NIES-2133 / IAM M-273 / BP-1)).